We begin with the raw amino-acid sequence, 221 residues long: Alpha-ketoglutarate-dependent dioxygenase alkB homolog 7, mitochondrial (221 aa).

A mitochondrion-targeting transit peptide spans 1-23 (MAGGGQVVLRTLSQQGWVRGSGA). The Fe cation site is built by H121 and D123. Y165 provides a ligand contact to 2-oxoglutarate. A Fe cation-binding site is contributed by H177. Residues 197 to 199 (RIS) and R203 each bind 2-oxoglutarate.

It belongs to the alkB family. Fe(2+) serves as cofactor.

It is found in the mitochondrion matrix. Functionally, may function as protein hydroxylase; can catalyze auto-hydroxylation at Leu-110 (in vitro), but this activity may be due to the absence of the true substrate. Required to induce programmed necrosis in response to DNA damage caused by cytotoxic alkylating agents. Acts by triggering the collapse of mitochondrial membrane potential and loss of mitochondrial function that leads to energy depletion and cell death. ALKBH7-mediated necrosis is probably required to prevent the accumulation of cells with DNA damage. Does not display DNA demethylase activity. Involved in fatty acid metabolism. The protein is Alpha-ketoglutarate-dependent dioxygenase alkB homolog 7, mitochondrial (ALKBH7) of Bos taurus (Bovine).